Consider the following 369-residue polypeptide: H-2 class I histocompatibility antigen, K-B alpha chain (369 aa).

The N-terminal stretch at 1–21 (MVPCTLLLLLAAALAPTQTRA) is a signal peptide. The interval 22–111 (GPHSLRYFVT…LLGYYNQSKG (90 aa)) is alpha-1. The Extracellular portion of the chain corresponds to 22–305 (GPHSLRYFVT…EPPPSTVSNM (284 aa)). Asparagine 107 carries an N-linked (GlcNAc...) asparagine glycan. The tract at residues 112 to 203 (GSHTIQVISG…KNGNATLLRT (92 aa)) is alpha-2. Cysteines 122 and 185 form a disulfide. Residue asparagine 197 is glycosylated (N-linked (GlcNAc...) asparagine). The interval 204–295 (DSPKAHVTHH…GLPEPLTLRW (92 aa)) is alpha-3. Residues 206 to 294 (PKAHVTHHSR…QGLPEPLTLR (89 aa)) enclose the Ig-like C1-type domain. Cysteine 224 and cysteine 280 form a disulfide bridge. The tract at residues 296-305 (EPPPSTVSNM) is connecting peptide. The chain crosses the membrane as a helical span at residues 306-328 (ATVAVLVVLGAAIVTGAVVAFVM). Residues 329-369 (KMRRRNTGGKGGDYALAPGSQTSDLSLPDCKVMVHDPHSLA) lie on the Cytoplasmic side of the membrane. A phosphoserine mark is found at serine 351 and serine 354.

Belongs to the MHC class I family. As to quaternary structure, heterodimer of an alpha chain and a beta chain (beta-2-microglobulin).

It is found in the membrane. Its function is as follows. Involved in the presentation of foreign antigens to the immune system. This is H-2 class I histocompatibility antigen, K-B alpha chain (H2-K1) from Mus musculus (Mouse).